Consider the following 261-residue polypeptide: Putative glyoxylase CFP32 (261 aa).

VOC domains are found at residues 11 to 129 (TPNW…LWQA) and 143 to 257 (TLIW…VLKP). Glyoxalase stretches follow at residues 13–123 (NWVD…TGAA) and 149–252 (LLTD…GAIF).

This is Putative glyoxylase CFP32 from Mycobacterium bovis (strain ATCC BAA-935 / AF2122/97).